A 178-amino-acid polypeptide reads, in one-letter code: Caveolin-1 (178 aa).

Serine 2 bears the N-acetylserine mark. Position 2 is a phosphoserine (serine 2). The required for homooligomerization stretch occupies residues 2–94 (SGGKYVDSEG…WKASFTTFTV (93 aa)). Residues 2–104 (SGGKYVDSEG…TKYWFYRLLS (103 aa)) lie on the Cytoplasmic side of the membrane. Lysine 5 bears the N6-acetyllysine; alternate mark. Lysine 5 participates in a covalent cross-link: Glycyl lysine isopeptide (Lys-Gly) (interchain with G-Cter in ubiquitin); alternate. Residue tyrosine 6 is modified to Phosphotyrosine. Serine 9 is modified (phosphoserine). Tyrosine 14 is modified (phosphotyrosine; by ABL1). Tyrosine 25 carries the post-translational modification Phosphotyrosine. Glycyl lysine isopeptide (Lys-Gly) (interchain with G-Cter in ubiquitin) cross-links involve residues lysine 26 and lysine 30. Serine 37 carries the phosphoserine modification. Residues lysine 39, lysine 47, and lysine 57 each participate in a glycyl lysine isopeptide (Lys-Gly) (interchain with G-Cter in ubiquitin) cross-link. Positions 82 to 94 (DGIWKASFTTFTV) are interaction with CAVIN3. An intramembrane region (helical) is located at residues 105–125 (ALFGIPMALIWGIYFAILSFL). Residues 126–178 (HIWAVVPCIKSFLIEIQCISRVYSIYVHTFCDPFFEAVGKIFSNIRINMQKET) are Cytoplasmic-facing. The interacts with SPRY1, SPRY2, SPRY3 and SPRY4 stretch occupies residues 131 to 142 (VPCIKSFLIEIQ). S-palmitoyl cysteine attachment occurs at residues cysteine 133, cysteine 143, and cysteine 156. Residues 149–160 (SIYVHTFCDPFF) are interacts with SPRY1, SPRY2, and SPRY4. Residues 167-178 (FSNIRINMQKET) are interacts with SPRY1, SPRY2, SPRY3 and SPRY4.

It belongs to the caveolin family. Homooligomer. Interacts with BMX, BTK, GLIPR2, NOSTRIN, SNAP25 and STX1A. Interacts with PACSIN2; this interaction induces membrane tubulation. Interacts (via the N-terminus) with DPP4; the interaction is direct. Interacts with SLC7A9. Interacts with CTNNB1, CDH1 and JUP. Interacts with TGFBR1. Interacts with CAVIN3 (via leucine-zipper domain) in a cholesterol-sensitive manner. Interacts with CAVIN1. Interacts with EHD2 in a cholesterol-dependent manner. Forms a ternary complex with UBXN6 and VCP; mediates CAV1 targeting to lysosomes for degradation. Interacts with ABCG1; this interaction regulates ABCG1-mediated cholesterol efflux. Interacts with NEU3; this interaction enhances NEU3 sialidase activity within caveola. Interacts (via C-terminus) with SPRY1, SPRY2 (via C-terminus), SPRY3, and SPRY4. Interacts with IGFBP5; this interaction allows trafficking of IGFBP5 from the plasma membrane to the nucleus. In terms of processing, phosphorylation of isoform Beta on serine residues is constitutive. Phosphorylated at Tyr-14 by ABL1 in response to oxidative stress. Post-translationally, ubiquitinated. Undergo monoubiquitination and multi- and/or polyubiquitination. Monoubiquitination of N-terminal lysines promotes integration in a ternary complex with UBXN6 and VCP which promotes oligomeric CAV1 targeting to lysosomes for degradation. Ubiquitinated by ZNRF1; leading to degradation and modulation of the TLR4-mediated immune response.

It localises to the golgi apparatus membrane. The protein localises to the cell membrane. It is found in the membrane. The protein resides in the caveola. Its subcellular location is the membrane raft. It localises to the golgi apparatus. The protein localises to the trans-Golgi network. In terms of biological role, may act as a scaffolding protein within caveolar membranes. Forms a stable heterooligomeric complex with CAV2 that targets to lipid rafts and drives caveolae formation. Mediates the recruitment of CAVIN proteins (CAVIN1/2/3/4) to the caveolae. Interacts directly with G-protein alpha subunits and can functionally regulate their activity. Involved in the costimulatory signal essential for T-cell receptor (TCR)-mediated T-cell activation. Its binding to DPP4 induces T-cell proliferation and NF-kappa-B activation in a T-cell receptor/CD3-dependent manner. Recruits CTNNB1 to caveolar membranes and may regulate CTNNB1-mediated signaling through the Wnt pathway. Negatively regulates TGFB1-mediated activation of SMAD2/3 by mediating the internalization of TGFBR1 from membrane rafts leading to its subsequent degradation. Binds 20(S)-hydroxycholesterol (20(S)-OHC). This chain is Caveolin-1 (CAV1), found in Canis lupus familiaris (Dog).